Here is a 334-residue protein sequence, read N- to C-terminus: N-acetyl-gamma-glutamyl-phosphate reductase (334 aa).

Cys154 is a catalytic residue.

This sequence belongs to the NAGSA dehydrogenase family. Type 1 subfamily.

It is found in the cytoplasm. It catalyses the reaction N-acetyl-L-glutamate 5-semialdehyde + phosphate + NADP(+) = N-acetyl-L-glutamyl 5-phosphate + NADPH + H(+). It functions in the pathway amino-acid biosynthesis; L-arginine biosynthesis; N(2)-acetyl-L-ornithine from L-glutamate: step 3/4. In terms of biological role, catalyzes the NADPH-dependent reduction of N-acetyl-5-glutamyl phosphate to yield N-acetyl-L-glutamate 5-semialdehyde. This Buchnera aphidicola subsp. Acyrthosiphon pisum (strain Tuc7) protein is N-acetyl-gamma-glutamyl-phosphate reductase.